We begin with the raw amino-acid sequence, 156 residues long: Cyanate hydratase (156 aa).

Active-site residues include Arg96, Glu99, and Ser122.

Belongs to the cyanase family.

It carries out the reaction cyanate + hydrogencarbonate + 3 H(+) = NH4(+) + 2 CO2. Its function is as follows. Catalyzes the reaction of cyanate with bicarbonate to produce ammonia and carbon dioxide. In Escherichia coli (strain ATCC 8739 / DSM 1576 / NBRC 3972 / NCIMB 8545 / WDCM 00012 / Crooks), this protein is Cyanate hydratase.